The primary structure comprises 182 residues: Ribosome-recycling factor (182 aa).

Residues 136-160 (VKKSEKDGDLSEDQSRDEQETIQKE) form a disordered region.

The protein belongs to the RRF family.

The protein resides in the cytoplasm. In terms of biological role, responsible for the release of ribosomes from messenger RNA at the termination of protein biosynthesis. May increase the efficiency of translation by recycling ribosomes from one round of translation to another. The protein is Ribosome-recycling factor of Prochlorococcus marinus (strain NATL2A).